The sequence spans 468 residues: 6-phospho-beta-galactosidase (468 aa).

D-galactose 6-phosphate contacts are provided by Gln19, His116, Asn159, Glu160, and Asn297. Catalysis depends on Glu160, which acts as the Proton donor. The active-site Nucleophile is the Glu375. D-galactose 6-phosphate-binding residues include Ser428, Trp429, Lys435, and Tyr437.

The protein belongs to the glycosyl hydrolase 1 family.

It catalyses the reaction a 6-phospho-beta-D-galactoside + H2O = D-galactose 6-phosphate + an alcohol. It participates in carbohydrate metabolism; lactose degradation; D-galactose 6-phosphate and beta-D-glucose from lactose 6-phosphate: step 1/1. The polypeptide is 6-phospho-beta-galactosidase (Streptococcus pyogenes serotype M6 (strain ATCC BAA-946 / MGAS10394)).